Consider the following 314-residue polypeptide: Testis-specific Y-encoded protein 4 (314 aa).

The protein belongs to the nucleosome assembly protein (NAP) family.

The protein localises to the cytoplasm. The protein resides in the nucleus. Functionally, may be involved in sperm differentiation and proliferation. This is Testis-specific Y-encoded protein 4 (TSPY4) from Homo sapiens (Human).